A 783-amino-acid chain; its full sequence is ATP-dependent 6-phosphofructokinase (783 aa).

Pro residues predominate over residues 1-10; sequence MAPPQAPVQP. A disordered region spans residues 1 to 20; the sequence is MAPPQAPVQPPKRRRIGVLT. An N-terminal catalytic PFK domain 1 region spans residues 1–389; it reads MAPPQAPVQP…YHFSYINTST (389 aa). Residues Gly23, 86–87, and 116–119 contribute to the ATP site; these read RC and GDGS. Mg(2+) is bound at residue Asp117. Substrate-binding positions include 162 to 164, Arg199, 206 to 208, Glu263, Arg291, and 297 to 300; these read SID, MGR, and HTQR. The active-site Proton acceptor is the Asp164. Residues 390-403 form an interdomain linker region; that stretch reads PDHPKLLLPENKRM. A C-terminal regulatory PFK domain 2 region spans residues 404 to 783; the sequence is RIGIIHVGAP…NATWSCYENA (380 aa). Residues Arg480, 537 to 541, Arg575, 582 to 584, Glu642, Arg668, 674 to 677, and Arg749 each bind beta-D-fructose 2,6-bisphosphate; these read TISNN, QGG, and HFQQ.

Belongs to the phosphofructokinase type A (PFKA) family. ATP-dependent PFK group I subfamily. Eukaryotic two domain clade 'E' sub-subfamily. In terms of assembly, homotetramer. It depends on Mg(2+) as a cofactor.

The protein localises to the cytoplasm. The catalysed reaction is beta-D-fructose 6-phosphate + ATP = beta-D-fructose 1,6-bisphosphate + ADP + H(+). It functions in the pathway carbohydrate degradation; glycolysis; D-glyceraldehyde 3-phosphate and glycerone phosphate from D-glucose: step 3/4. Allosterically activated by ADP, AMP, or fructose 2,6-bisphosphate, and allosterically inhibited by ATP or citrate. In terms of biological role, catalyzes the phosphorylation of D-fructose 6-phosphate to fructose 1,6-bisphosphate by ATP, the first committing step of glycolysis. This Aspergillus niger protein is ATP-dependent 6-phosphofructokinase (pfkA).